We begin with the raw amino-acid sequence, 451 residues long: Pre-mRNA-splicing factor PRP46 (451 aa).

7 WD repeats span residues 137-168, 180-210, 222-252, 264-294, 306-335, 348-377, and 397-427; these read GHLG…KVWD, GHVM…KCWD, GHLS…KLWD, GHKG…RLWD, HHKR…RSWG, EKTG…SFYD, and EGER…KIWK.

It belongs to the WD repeat PRL1/PRL2 family. In terms of assembly, belongs to the CWC complex (or CEF1-associated complex), a spliceosome subcomplex composed of the U2, U5 and U6 snRNAs and at least BUD13, BUD31, BRR2, CDC40, CEF1, CLF1, CUS1, CWC2, CWC15, CWC21, CWC22, CWC23, CWC24, CWC25, CWC27, ECM2, HSH155, IST3, ISY1, LEA1, MSL1, NTC20, PRP8, PRP9, PRP11, PRP19, PRP21, PRP22, PRP45, PRP46, SLU7, SMB1, SMD1, SMD2, SMD3, SMX2, SMX3, SNT309, SNU114, SPP2, SYF1, SYF2, RSE1 and YJU2. Interacts with CEF1, CLF1, NTC20, PRP45 and SYF1.

It localises to the cytoplasm. Its subcellular location is the nucleus. In terms of biological role, involved in pre-mRNA splicing. May also be required for cell cycle progression at G2/M. This Saccharomyces cerevisiae (strain ATCC 204508 / S288c) (Baker's yeast) protein is Pre-mRNA-splicing factor PRP46 (PRP46).